The following is a 205-amino-acid chain: Small ribosomal subunit protein uS4 (205 aa).

The S4 RNA-binding domain occupies 110 to 172; that stretch reads RRLQTIIYRK…VGSPITKEKL (63 aa). The tract at residues 173 to 205 is disordered; sequence MAKPQPASAPKAAAAPKAAAAPAEAAAAPKKEE. Residues 174–205 are compositionally biased toward low complexity; the sequence is AKPQPASAPKAAAAPKAAAAPAEAAAAPKKEE.

Belongs to the universal ribosomal protein uS4 family. In terms of assembly, part of the 30S ribosomal subunit. Contacts protein S5. The interaction surface between S4 and S5 is involved in control of translational fidelity.

One of the primary rRNA binding proteins, it binds directly to 16S rRNA where it nucleates assembly of the body of the 30S subunit. Functionally, with S5 and S12 plays an important role in translational accuracy. The sequence is that of Small ribosomal subunit protein uS4 from Methanocella arvoryzae (strain DSM 22066 / NBRC 105507 / MRE50).